Reading from the N-terminus, the 174-residue chain is MPRSFDMSADYEGSVEEVHRAFYEADYWKARLAETPVDVATLESIRVGGDSGDDGTIEVVTLQMVRSHNLPGLVTQLHRGDLSVRREETWGPVKEGIATASIAGSIVDAPVNLWGTAVLSPIPESGGSRMTLQVTIQVRIPFIGGKLERLIGTQLSQLVTIEQRFTTLWITNNV.

This is an uncharacterized protein from Mycobacterium tuberculosis (strain CDC 1551 / Oshkosh).